The chain runs to 105 residues: Pyrimidine/purine nucleoside phosphorylase (105 aa).

It belongs to the nucleoside phosphorylase PpnP family.

The enzyme catalyses a purine D-ribonucleoside + phosphate = a purine nucleobase + alpha-D-ribose 1-phosphate. It carries out the reaction adenosine + phosphate = alpha-D-ribose 1-phosphate + adenine. It catalyses the reaction cytidine + phosphate = cytosine + alpha-D-ribose 1-phosphate. The catalysed reaction is guanosine + phosphate = alpha-D-ribose 1-phosphate + guanine. The enzyme catalyses inosine + phosphate = alpha-D-ribose 1-phosphate + hypoxanthine. It carries out the reaction thymidine + phosphate = 2-deoxy-alpha-D-ribose 1-phosphate + thymine. It catalyses the reaction uridine + phosphate = alpha-D-ribose 1-phosphate + uracil. The catalysed reaction is xanthosine + phosphate = alpha-D-ribose 1-phosphate + xanthine. In terms of biological role, catalyzes the phosphorolysis of diverse nucleosides, yielding D-ribose 1-phosphate and the respective free bases. Can use uridine, adenosine, guanosine, cytidine, thymidine, inosine and xanthosine as substrates. Also catalyzes the reverse reactions. This chain is Pyrimidine/purine nucleoside phosphorylase, found in Anaeromyxobacter sp. (strain Fw109-5).